A 501-amino-acid polypeptide reads, in one-letter code: Aspartate--tRNA ligase, cytoplasmic (501 aa).

Threonine 52 bears the Phosphothreonine mark. The residue at position 74 (lysine 74) is an N6-acetyllysine. Residue glutamate 229 participates in L-aspartate binding. Serine 249 is modified (phosphoserine). The tract at residues glutamine 251–lysine 254 is aspartate. An L-aspartate-binding site is contributed by arginine 273. Residues arginine 273–glutamate 275 and arginine 281–leucine 283 each bind ATP. Position 374 is an N6-acetyllysine (lysine 374). Glutamate 424 serves as a coordination point for ATP. L-aspartate is bound by residues serine 427 and arginine 431. ATP is bound at residue glycine 472–arginine 475.

Belongs to the class-II aminoacyl-tRNA synthetase family. Type 2 subfamily. Homodimer. Part of a multisubunit complex that groups tRNA ligases for Arg (RARS1), Asp (DARS1), Gln (QARS1), Ile (IARS1), Leu (LARS1), Lys (KARS1), Met (MARS1) the bifunctional ligase for Glu and Pro (EPRS1) and the auxiliary subunits AIMP1/p43, AIMP2/p38 and EEF1E1/p18.

It is found in the cytoplasm. It catalyses the reaction tRNA(Asp) + L-aspartate + ATP = L-aspartyl-tRNA(Asp) + AMP + diphosphate. In terms of biological role, catalyzes the specific attachment of an amino acid to its cognate tRNA in a 2 step reaction: the amino acid (AA) is first activated by ATP to form AA-AMP and then transferred to the acceptor end of the tRNA. The chain is Aspartate--tRNA ligase, cytoplasmic (Dars1) from Rattus norvegicus (Rat).